Reading from the N-terminus, the 290-residue chain is 4-hydroxybenzoate octaprenyltransferase (290 aa).

7 consecutive transmembrane segments (helical) span residues 33-53 (LWAL…AVFV), 99-119 (LFVV…TMTI), 141-161 (LPQV…FAAV), 163-183 (ESVP…AVAY), 213-233 (FIIG…GWLN), 237-257 (WGYY…QKLI), and 268-288 (AFMN…MSYW).

It belongs to the UbiA prenyltransferase family. Requires Mg(2+) as cofactor.

It localises to the cell inner membrane. The catalysed reaction is all-trans-octaprenyl diphosphate + 4-hydroxybenzoate = 4-hydroxy-3-(all-trans-octaprenyl)benzoate + diphosphate. Its pathway is cofactor biosynthesis; ubiquinone biosynthesis. Its function is as follows. Catalyzes the prenylation of para-hydroxybenzoate (PHB) with an all-trans polyprenyl group. Mediates the second step in the final reaction sequence of ubiquinone-8 (UQ-8) biosynthesis, which is the condensation of the polyisoprenoid side chain with PHB, generating the first membrane-bound Q intermediate 3-octaprenyl-4-hydroxybenzoate. The chain is 4-hydroxybenzoate octaprenyltransferase from Escherichia fergusonii (strain ATCC 35469 / DSM 13698 / CCUG 18766 / IAM 14443 / JCM 21226 / LMG 7866 / NBRC 102419 / NCTC 12128 / CDC 0568-73).